A 149-amino-acid polypeptide reads, in one-letter code: Transcriptional repressor NrdR (149 aa).

A zinc finger spans residues 3-34 (CPFCGHLETQVVETRISEDAEFIRRRRQCGAC). The 91-residue stretch at 49–139 (PSIVKKDGRR…VYRSFEDIDE (91 aa)) folds into the ATP-cone domain.

Belongs to the NrdR family. The cofactor is Zn(2+).

Negatively regulates transcription of bacterial ribonucleotide reductase nrd genes and operons by binding to NrdR-boxes. In Polaromonas naphthalenivorans (strain CJ2), this protein is Transcriptional repressor NrdR.